The primary structure comprises 299 residues: MAEEQARHVKNGLECIRALKAEPIGSLAIGEAMAAWSEISDNPGQEQATCKEEEAGASGLSKPCLSAIGSTEGGAPRIRGQGSGESDDDTETLGFPSRNLQASSTGLQCYYVYDHSGEAVKGIQDADSIMVQSGLDGDSTLSGGDNESENSDVDIGEPDTEGYAITDRGPAPISMGFRASDVETAEGGEIHELLRLQSRGNNFPKLGKTLNVPPPPDPGRASTSETPIKKGHRREISLIWDGDRVFIDRWCNPMCSKVTLGTIRARCTCGECPRVCEQCRTDTGVDTRIWYHNLPEIPE.

Residues 40–98 (SDNPGQEQATCKEEEAGASGLSKPCLSAIGSTEGGAPRIRGQGSGESDDDTETLGFPSR) form a disordered region. The segment at 110–120 (YYVYDHSGEAV) is interaction with host STAT1. The span at 134-145 (GLDGDSTLSGGD) shows a compositional bias: low complexity. 2 disordered regions span residues 134–174 (GLDG…APIS) and 204–230 (PKLGKTLNVPPPPDPGRASTSETPIKK). Residues 146–160 (NESENSDVDIGEPDT) are compositionally biased toward acidic residues. Histidine 232, cysteine 251, cysteine 255, cysteine 267, cysteine 269, cysteine 272, cysteine 276, and cysteine 279 together coordinate Zn(2+).

Belongs to the paramyxoviruses V protein family. In terms of assembly, interacts with host IFIH1/MDA5 and DHX58/LGP2; these interactions are involved in the inhibition of the host type I interferon signaling pathway. Interacts with host TYK2; this interaction inhibits the type I interferon signaling pathway without affecting the type II pathway. Interacts with host IRF7; this interaction inhibits IRF7 translocation to the nucleus. Interacts with host CHUK. Interacts with host RELA/p65; this interaction inhibits the nuclear translocation of NF-KappaB. Interacts (via N-terminus) with host STAT1 and JAK1; these interactions inhibit STAT1 phosphorylation by Jak1 and thereby the type I interferon signaling pathway. Interacts (via C-terminus) with host STAT2; this interaction is involved in the inhibition of the host type I interferon signaling pathway. Forms a complex with host PPP1CA and PPP1CC; this interaction prevents dephosphorylation of host IFIH1/MDA5 and leads to the inhibition of the host type I interferon signaling pathway. Interacts with host IRF9; this interaction prevents the binding of IRF9 to STAT2 and thereby the type I interferon signaling pathway. Interacts with host RIGI regulatory protein (via CARDs domain) and host TRIM25 (via SPRY domain); these interactions prevent TRIM25-mediated ubiquitination of RIG-I and disrupts downstream RIG-I signaling.

It is found in the host cytoplasm. Plays an essential role in the inhibition of host immune response. Prevents the establishment of cellular antiviral state by blocking interferon-alpha/beta (IFN-alpha/beta) production and signaling pathway. Interacts with host IFIH1/MDA5 and DHX58/LGP2 to inhibit the transduction pathway involved in the activation of IFN-beta promoter, thus protecting the virus against cell antiviral state. Blocks the type I interferon signaling pathway by interacting with host TYK2 and thereby inhibiting downstream STAT1 and STAT2 phosphorylation. Blocks the type I interferon signaling pathway by disrupting the RIG-I signaling pathway. Moderately affects the type II interferon signaling. Prevents PP1alpha/gamma-mediated dephosphorylation of host IFIH1/MDA5 and thus blocks its activation. This Measles virus (strain IP-3-Ca) (MeV) protein is Non-structural protein V (P/V).